A 21-amino-acid chain; its full sequence is VLDIYEQKLGQTRVLDIYEQK.

The protein belongs to the GST superfamily. Phi family.

The enzyme catalyses RX + glutathione = an S-substituted glutathione + a halide anion + H(+). In terms of biological role, conjugation of reduced glutathione to a wide number of exogenous and endogenous hydrophobic electrophiles. In plants, may have a detoxification role against certain herbicides. In Populus euphratica (Euphrates poplar), this protein is Glutathione S-transferase 1.